The following is a 2566-amino-acid chain: Zinc finger protein GLI1 (2566 aa).

Disordered stretches follow at residues 349 to 375 (HHSSGYVPNHTAPMLRGGKKRSHSQSS), 430 to 508 (DIRR…RSTG), and 985 to 1046 (KSIE…GDPD). Composition is skewed to polar residues over residues 434-444 (TLSSNGNSSHT) and 457-492 (WSPNSPHSSGSGFDNYQTSSHKSLPLPSTLQTYQQH). The span at 493–508 (SGYTSTSGSSGNRSTG) shows a compositional bias: low complexity. Positions 993-1016 (WQNQNVFSSRRNSTRDPSNNNNSG) are enriched in polar residues. Positions 1023–1035 (DEPDVDDDEELDD) are enriched in acidic residues. The C2H2-type 1; degenerate zinc-finger motif lies at 1088-1110 (RECVRGTRPFKAQYMLVVHMRRH). 3 consecutive C2H2-type zinc fingers follow at residues 1116–1140 (HKCIFEGCIKRYSRLENLKTHLRSH), 1146–1171 (YQCEIPGCNKAFSNASDRAKHQNRTH), and 1177–1202 (YTCKVDGCSKRYTDPSSLRKHVKTVH). Disordered stretches follow at residues 1254-1313 (GNSN…PRDS), 1465-1491 (LSTTSNPVQSLSPSIDNPINSTGTKQK), 1650-1677 (SKNMDNNSQTKNNNELNEENSPQSNQNE), 1727-1791 (AAAS…MDND), and 2067-2091 (MHFSPHSYVHSSSSNSSPFNSNRPH). 2 stretches are compositionally biased toward low complexity: residues 1661-1677 (NNNELNEENSPQSNQNE) and 1727-1743 (AAASSGIGSGVTTTTAS). Basic residues predominate over residues 1752 to 1769 (NHHHQKQQPKHSHQHQNR). Positions 1770–1791 (TKSINSDNNYSNQDNVSTMDND) are enriched in polar residues. The segment covering 2070–2090 (SPHSYVHSSSSNSSPFNSNRP) has biased composition (low complexity).

The protein belongs to the GLI C2H2-type zinc-finger protein family. Expressed in female-paired or unpaired males along the ventral surface in neurons and skin tegument cells. In virgin and mature females, expressed bilaterally along the edges of the body in neurons. In mature females, also expressed in skin tegument cells.

The protein resides in the nucleus. Functionally, probable transcription factor which plays an essential role in males to trigger female sexual development by inducing NRPS expression in male. NRPS produces the pheromone beta-alanyl-tryptamine (BATT), which stimulates female sexual development. The sequence is that of Zinc finger protein GLI1 from Schistosoma mansoni (Blood fluke).